A 443-amino-acid polypeptide reads, in one-letter code: Adenylosuccinate synthetase (443 aa).

GTP contacts are provided by residues 12 to 18 (GDEGKGK) and 40 to 42 (GHT). The Proton acceptor role is filled by Asp13. Positions 13 and 40 each coordinate Mg(2+). IMP-binding positions include 13-16 (DEGK), 38-41 (NAGH), Thr128, Arg142, Gln223, Thr238, and Arg302. His41 acts as the Proton donor in catalysis. 298–304 (TTTGRRR) provides a ligand contact to substrate. GTP contacts are provided by residues Arg304, 330–332 (KLD), and 412–414 (SLG).

This sequence belongs to the adenylosuccinate synthetase family. Homodimer. Mg(2+) is required as a cofactor.

It is found in the cytoplasm. It catalyses the reaction IMP + L-aspartate + GTP = N(6)-(1,2-dicarboxyethyl)-AMP + GDP + phosphate + 2 H(+). Its pathway is purine metabolism; AMP biosynthesis via de novo pathway; AMP from IMP: step 1/2. Its function is as follows. Plays an important role in the de novo pathway of purine nucleotide biosynthesis. Catalyzes the first committed step in the biosynthesis of AMP from IMP. The sequence is that of Adenylosuccinate synthetase from Picosynechococcus sp. (strain ATCC 27264 / PCC 7002 / PR-6) (Agmenellum quadruplicatum).